The primary structure comprises 582 residues: 2-succinyl-5-enolpyruvyl-6-hydroxy-3-cyclohexene-1-carboxylate synthase (582 aa).

Belongs to the TPP enzyme family. MenD subfamily. Homodimer. Requires Mg(2+) as cofactor. Mn(2+) is required as a cofactor. Thiamine diphosphate serves as cofactor.

The catalysed reaction is isochorismate + 2-oxoglutarate + H(+) = 5-enolpyruvoyl-6-hydroxy-2-succinyl-cyclohex-3-ene-1-carboxylate + CO2. It functions in the pathway quinol/quinone metabolism; 1,4-dihydroxy-2-naphthoate biosynthesis; 1,4-dihydroxy-2-naphthoate from chorismate: step 2/7. Its pathway is cofactor biosynthesis; phylloquinone biosynthesis. In terms of biological role, catalyzes the thiamine diphosphate-dependent decarboxylation of 2-oxoglutarate and the subsequent addition of the resulting succinic semialdehyde-thiamine pyrophosphate anion to isochorismate to yield 2-succinyl-5-enolpyruvyl-6-hydroxy-3-cyclohexene-1-carboxylate (SEPHCHC). This Trichodesmium erythraeum (strain IMS101) protein is 2-succinyl-5-enolpyruvyl-6-hydroxy-3-cyclohexene-1-carboxylate synthase.